The sequence spans 258 residues: Phosphoribosylaminoimidazole-succinocarboxamide synthase (258 aa).

It belongs to the SAICAR synthetase family.

The catalysed reaction is 5-amino-1-(5-phospho-D-ribosyl)imidazole-4-carboxylate + L-aspartate + ATP = (2S)-2-[5-amino-1-(5-phospho-beta-D-ribosyl)imidazole-4-carboxamido]succinate + ADP + phosphate + 2 H(+). It functions in the pathway purine metabolism; IMP biosynthesis via de novo pathway; 5-amino-1-(5-phospho-D-ribosyl)imidazole-4-carboxamide from 5-amino-1-(5-phospho-D-ribosyl)imidazole-4-carboxylate: step 1/2. The chain is Phosphoribosylaminoimidazole-succinocarboxamide synthase from Rhizorhabdus wittichii (strain DSM 6014 / CCUG 31198 / JCM 15750 / NBRC 105917 / EY 4224 / RW1) (Sphingomonas wittichii).